Consider the following 372-residue polypeptide: Putative glutamate--cysteine ligase 2 (372 aa).

Belongs to the glutamate--cysteine ligase type 2 family. YbdK subfamily.

It carries out the reaction L-cysteine + L-glutamate + ATP = gamma-L-glutamyl-L-cysteine + ADP + phosphate + H(+). Its function is as follows. ATP-dependent carboxylate-amine ligase which exhibits weak glutamate--cysteine ligase activity. This Rhodopirellula baltica (strain DSM 10527 / NCIMB 13988 / SH1) protein is Putative glutamate--cysteine ligase 2.